The chain runs to 136 residues: Histone H3 (136 aa).

The tract at residues 1–43 is disordered; the sequence is MARTKQTARKSTGAKAPRKQLASKAARKSAPATGGIKKPHRFR. Lys5 and Lys10 each carry N6,N6,N6-trimethyllysine; alternate. Lys5 is subject to N6,N6-dimethyllysine; alternate. 2 positions are modified to N6-acetyllysine; alternate: Lys5 and Lys10. Lys5 carries the post-translational modification N6-methyllysine; alternate. Ser11 is subject to Phosphoserine. Residues Lys15, Lys19, and Lys24 each carry the N6-acetyllysine modification. An N6,N6,N6-trimethyllysine; alternate mark is found at Lys28 and Lys37. N6,N6-dimethyllysine; alternate occurs at positions 28 and 37. Lys28, Lys37, and Lys57 each carry N6-acetyllysine; alternate. Lys28, Lys37, and Lys57 each carry N6-methyllysine; alternate. At Lys80 the chain carries N6-methyllysine.

This sequence belongs to the histone H3 family. In terms of assembly, the nucleosome is a histone octamer containing two molecules each of H2A, H2B, H3 and H4 assembled in one H3-H4 heterotetramer and two H2A-H2B heterodimers. The octamer wraps approximately 147 bp of DNA. In terms of processing, phosphorylated to form H3S10ph. H3S10ph promotes subsequent H3K14ac formation by GCN5. H3S10ph is only found in the mitotically dividing MIC, but not in the amitotically dividing MAC. H3S10ph is correlated with chromosome condensation during mitotic or meiotic micronuclear divisions. Post-translationally, acetylation of histone H3 leads to transcriptional activation. H3K14ac formation by GCN5 is promoted by H3S10ph. H3K9acK14ac is the preferred acetylated form of newly synthesized H3. Acetylation occurs almost exclusively in the MAC. Methylated to form H3K4me. H3K4me is only found in the transcriptionally active MAC. Methylated to form H3K9me in developing MACs during conjugation, when genome-wide DNA elimination occurs. At this stage, H3K9me specifically occurs on DNA sequences being eliminated (IES), probably targeted by small scan RNAs (scnRNAs) bound to IES, and is required for efficient IES elimination. H3K9me is required for the interaction with the chromodomains of PDD1 and PDD3. In terms of processing, the full-length protein H3S (slow migrating) is converted to H3F (fast migrating) by proteolytic removal of the first 6 residues. H3F is unique to MIC, and processing seems to occur regularly each generation at a specific point in the cell cycle.

It localises to the nucleus. The protein localises to the chromosome. Functionally, core component of nucleosome. Nucleosomes wrap and compact DNA into chromatin, limiting DNA accessibility to the cellular machineries which require DNA as a template. Histones thereby play a central role in transcription regulation, DNA repair, DNA replication and chromosomal stability. DNA accessibility is regulated via a complex set of post-translational modifications of histones, also called histone code, and nucleosome remodeling. This is Histone H3 from Tetrahymena pyriformis.